We begin with the raw amino-acid sequence, 432 residues long: Adenylosuccinate synthetase (432 aa).

GTP-binding positions include 13–19 and 41–43; these read GDEGKGK and GHT. The active-site Proton acceptor is the Asp14. Mg(2+) is bound by residues Asp14 and Gly41. Residues 14-17, 39-42, Thr130, Arg144, Gln225, Thr240, and Arg304 each bind IMP; these read DEGK and NAGH. His42 functions as the Proton donor in the catalytic mechanism. Residue 300-306 coordinates substrate; that stretch reads AVTGRPR. GTP-binding positions include Arg306, 332 to 334, and 415 to 417; these read KLD and STG.

This sequence belongs to the adenylosuccinate synthetase family. Homodimer. It depends on Mg(2+) as a cofactor.

The protein resides in the cytoplasm. The catalysed reaction is IMP + L-aspartate + GTP = N(6)-(1,2-dicarboxyethyl)-AMP + GDP + phosphate + 2 H(+). It functions in the pathway purine metabolism; AMP biosynthesis via de novo pathway; AMP from IMP: step 1/2. In terms of biological role, plays an important role in the de novo pathway of purine nucleotide biosynthesis. Catalyzes the first committed step in the biosynthesis of AMP from IMP. In Haemophilus influenzae (strain PittGG), this protein is Adenylosuccinate synthetase.